Consider the following 1331-residue polypeptide: Xanthine dehydrogenase/oxidase (1331 aa).

Residues 4–91 (DELVFFVNGK…HVAVTTVEGI (88 aa)) enclose the 2Fe-2S ferredoxin-type domain. The [2Fe-2S] cluster site is built by C43, C48, C51, C73, C112, C115, C147, and C149. The 186-residue stretch at 228 to 413 (FEGERVTWIQ…LSIEIPYSKE (186 aa)) folds into the FAD-binding PCMH-type domain. FAD-binding positions include 256-263 (LVVGNTEI), F336, 346-350 (SIGGN), D359, L403, and K421. A disulfide bridge links C535 with C992. Positions 767 and 798 each coordinate Mo-molybdopterin. Residues E802 and R880 each coordinate substrate. R912 contributes to the Mo-molybdopterin binding site. Residues F914 and T1010 each contribute to the substrate site. Mo-molybdopterin is bound at residue A1079. The active-site Proton acceptor is E1261.

It belongs to the xanthine dehydrogenase family. Homodimer. Interacts with BTN1A1. It depends on [2Fe-2S] cluster as a cofactor. Requires FAD as cofactor. The cofactor is Mo-molybdopterin. Post-translationally, subject to partial proteolysis; this alters the enzyme from the dehydrogenase form (D) to the oxidase form (O). Contains sulfhydryl groups that are easily oxidized (in vitro); this alters the enzyme from the dehydrogenase form (D) to the oxidase form (O).

The protein localises to the peroxisome. It localises to the cytoplasm. It is found in the secreted. The enzyme catalyses xanthine + NAD(+) + H2O = urate + NADH + H(+). It carries out the reaction hypoxanthine + NAD(+) + H2O = xanthine + NADH + H(+). It catalyses the reaction xanthine + O2 + H2O = urate + H2O2. Can be converted from the dehydrogenase form (D) to the oxidase form (O) irreversibly by proteolysis or reversibly through the oxidation of sulfhydryl groups. In terms of biological role, key enzyme in purine degradation. Catalyzes the oxidation of hypoxanthine to xanthine. Catalyzes the oxidation of xanthine to uric acid. Contributes to the generation of reactive oxygen species. The polypeptide is Xanthine dehydrogenase/oxidase (Xdh) (Rattus norvegicus (Rat)).